The primary structure comprises 226 residues: Leucyl/phenylalanyl-tRNA--protein transferase (226 aa).

The protein belongs to the L/F-transferase family.

The protein resides in the cytoplasm. It catalyses the reaction N-terminal L-lysyl-[protein] + L-leucyl-tRNA(Leu) = N-terminal L-leucyl-L-lysyl-[protein] + tRNA(Leu) + H(+). The catalysed reaction is N-terminal L-arginyl-[protein] + L-leucyl-tRNA(Leu) = N-terminal L-leucyl-L-arginyl-[protein] + tRNA(Leu) + H(+). The enzyme catalyses L-phenylalanyl-tRNA(Phe) + an N-terminal L-alpha-aminoacyl-[protein] = an N-terminal L-phenylalanyl-L-alpha-aminoacyl-[protein] + tRNA(Phe). In terms of biological role, functions in the N-end rule pathway of protein degradation where it conjugates Leu, Phe and, less efficiently, Met from aminoacyl-tRNAs to the N-termini of proteins containing an N-terminal arginine or lysine. This Stutzerimonas stutzeri (strain A1501) (Pseudomonas stutzeri) protein is Leucyl/phenylalanyl-tRNA--protein transferase.